The sequence spans 565 residues: Molybdenum cofactor biosynthesis protein 1 (565 aa).

A molybdenum cofactor biosynthesis protein A region spans residues 3 to 367; it reads LLARHAIRLL…AVQRKKKQHA (365 aa). One can recognise a Radical SAM core domain in the interval 64–276; the sequence is SFGRHHTYLR…LQIIRQRWPD (213 aa). R73 provides a ligand contact to GTP. Residues C80 and C84 each contribute to the [4Fe-4S] cluster site. An S-adenosyl-L-methionine-binding site is contributed by Y86. C87 lines the [4Fe-4S] cluster pocket. Residue R123 coordinates GTP. G127 contributes to the S-adenosyl-L-methionine binding site. Residue T154 participates in GTP binding. S178 provides a ligand contact to S-adenosyl-L-methionine. GTP is bound at residue K214. M248 is a binding site for S-adenosyl-L-methionine. [4Fe-4S] cluster-binding residues include C311 and C314. 316–318 lines the GTP pocket; sequence RLR. C328 lines the [4Fe-4S] cluster pocket. Catalysis depends on D525, which acts as the For molybdenum cofactor biosynthesis protein C activity.

It in the C-terminal section; belongs to the MoaC family. This sequence in the N-terminal section; belongs to the radical SAM superfamily. MoaA family. As to quaternary structure, isoform Mocs1a and isoform Mocs1b probably form a heterooligomer. [4Fe-4S] cluster is required as a cofactor.

It carries out the reaction GTP + AH2 + S-adenosyl-L-methionine = (8S)-3',8-cyclo-7,8-dihydroguanosine 5'-triphosphate + 5'-deoxyadenosine + L-methionine + A + H(+). The enzyme catalyses (8S)-3',8-cyclo-7,8-dihydroguanosine 5'-triphosphate = cyclic pyranopterin phosphate + diphosphate. It participates in cofactor biosynthesis; molybdopterin biosynthesis. Its function is as follows. Isoform Mocs1a and isoform Mocs1b probably form a complex that catalyzes the conversion of 5'-GTP to cyclic pyranopterin monophosphate (cPMP). Mocs1a catalyzes the cyclization of GTP to (8S)-3',8-cyclo-7,8-dihydroguanosine 5'-triphosphate and Mocs1b catalyzes the subsequent conversion of (8S)-3',8-cyclo-7,8-dihydroguanosine 5'-triphosphate to cPMP. This is Molybdenum cofactor biosynthesis protein 1 (Mocs1) from Drosophila melanogaster (Fruit fly).